Consider the following 160-residue polypeptide: MDASRKNRLKLIKNTMIKMEEQIVKSMIKAFTMLESLLVLGLVSILALGLSGSVQSTFSAVEEQIFFMEFEELYRETQKRSVASQQKTSLNLDGQMISNGSQKLTVPKGIQAPSGQSITFDRAGGNSSLAKVEFQTSKGAIRYQLYLGNGKIKRIKETKN.

A helical membrane pass occupies residues 30–50; it reads AFTMLESLLVLGLVSILALGL.

In terms of assembly, the transformation pili are flexible filaments, consisting mainly of the major pilin ComGC and smaller amounts of the minor pilins, including at least ComGD, ComGF and ComGG, and perhaps ComGE. Interacts with ComGE. Interacts with ComGF. Interacts with ComGG.

The protein localises to the cell membrane. It localises to the cell surface. The protein resides in the fimbrium. In terms of biological role, required for formation of the type IV-like pilus (T4P) that plays a role in transformation. Transformation pili are dynamically extended and retracted, perhaps thereby promoting DNA uptake and transformation. Involved in transformation. Required for DNA binding. The sequence is that of Competence protein ComGD from Streptococcus pneumoniae (strain ATCC BAA-255 / R6).